The chain runs to 273 residues: 4-hydroxy-tetrahydrodipicolinate reductase (273 aa).

NAD(+) contacts are provided by residues 12 to 17 (GAGGRM) and E38. R39 provides a ligand contact to NADP(+). Residues 102–104 (GTT) and 126–129 (AANF) contribute to the NAD(+) site. H159 functions as the Proton donor/acceptor in the catalytic mechanism. H160 is a (S)-2,3,4,5-tetrahydrodipicolinate binding site. K163 functions as the Proton donor in the catalytic mechanism. 169-170 (GT) contacts (S)-2,3,4,5-tetrahydrodipicolinate.

This sequence belongs to the DapB family. As to quaternary structure, homotetramer.

Its subcellular location is the cytoplasm. It catalyses the reaction (S)-2,3,4,5-tetrahydrodipicolinate + NAD(+) + H2O = (2S,4S)-4-hydroxy-2,3,4,5-tetrahydrodipicolinate + NADH + H(+). The catalysed reaction is (S)-2,3,4,5-tetrahydrodipicolinate + NADP(+) + H2O = (2S,4S)-4-hydroxy-2,3,4,5-tetrahydrodipicolinate + NADPH + H(+). It functions in the pathway amino-acid biosynthesis; L-lysine biosynthesis via DAP pathway; (S)-tetrahydrodipicolinate from L-aspartate: step 4/4. In terms of biological role, catalyzes the conversion of 4-hydroxy-tetrahydrodipicolinate (HTPA) to tetrahydrodipicolinate. The polypeptide is 4-hydroxy-tetrahydrodipicolinate reductase (Klebsiella pneumoniae subsp. pneumoniae (strain ATCC 700721 / MGH 78578)).